The chain runs to 554 residues: MKSLMMNKLLFLQRITDSPSTTIISTFIVTIISIVFLYTVLLIRTTKNKQKIAAPKASGAWPFIGHLKLFMKQDTQFYRTLGTMSDKYGSVFTLRLGNQAILVVSNWEMVKECFTTNDKSFSNRPSTLSTKYMLNDTNSVVFSPYGTYWREMRKILVQKLLISNQRSEALKNLKTKEIDNSFVKLNDLCNNDVSGGGTKVRMDEWLADMMFNIIARITFGYQSGGGDAPGASTTSKNVERYKKTLDEMFVVLATRFAVSDIFPSLEFIDRLRGLVKDMKILGDELNSIAGCFIEEHRQKRRESLSSLLSLSNESVGDEQDFIDVLLSIMDQSRLPGDDPDFIIKIMILEAFAGGTDSLSATLTWVLSLLLNHPNVLKRAREEIDRHVENGKQVEVSDIPKLGYIDAIIKETMRLYPVGALSERYTTEECEVGRFNVPAGTRLLVNIWKIHRDPSVWENPSDFQPERFLCSDKVGVDLYGQNYELIPFGAGRRVCPAIVSSLQTMHYALARLIQGYEMKSASLDGKVNMEEMIAMSCHKMSPLEVIISPREPRRS.

Residues 23–43 (IISTFIVTIISIVFLYTVLLI) traverse the membrane as a helical segment. Residue cysteine 494 participates in heme binding.

This sequence belongs to the cytochrome P450 family. Heme is required as a cofactor. Highly expressed in capsules. Expressed is stems.

The protein localises to the membrane. It carries out the reaction (S)-1-hydroxy-N-methylcanadine + reduced [NADPH--hemoprotein reductase] + O2 = (13S,14R)-1,13-dihydroxy-N-methylcanadine + oxidized [NADPH--hemoprotein reductase] + H2O + H(+). Its pathway is alkaloid biosynthesis. Functionally, cytochrome P450 involved in the biosynthesis of the benzylisoquinoline alkaloid noscapine. Converts (S)-1-hydroxy-N-methylcanadine to (13S,14R)-1,13-dihydroxy-N-methylcanadine. The chain is (S)-1-hydroxy-N-methylcanadine 13-hydroxylase CYP82X2 from Papaver somniferum (Opium poppy).